The following is a 1158-amino-acid chain: ATP-dependent helicase/deoxyribonuclease subunit B (1158 aa).

8-15 is a binding site for ATP; it reads GRAGTGKS. [4Fe-4S] cluster-binding residues include Cys791, Cys1112, Cys1115, and Cys1121.

It belongs to the helicase family. AddB/RexB type 1 subfamily. Heterodimer of AddA and AddB. Mg(2+) is required as a cofactor. [4Fe-4S] cluster serves as cofactor.

In terms of biological role, the heterodimer acts as both an ATP-dependent DNA helicase and an ATP-dependent, dual-direction single-stranded exonuclease. Recognizes the chi site generating a DNA molecule suitable for the initiation of homologous recombination. The AddB subunit has 5' -&gt; 3' nuclease activity but not helicase activity. In Clostridium perfringens (strain SM101 / Type A), this protein is ATP-dependent helicase/deoxyribonuclease subunit B.